We begin with the raw amino-acid sequence, 299 residues long: Taste receptor type 2 member 19 (299 aa).

Position 1 (Met1) is a topological domain, extracellular. Residues 2 to 22 (MCFLLIILSILVVFAFVLGNF) traverse the membrane as a helical segment. The Cytoplasmic portion of the chain corresponds to 23-55 (SNGFIALVNVIDWVNTRKISSADQILTALVVSR). The helical transmembrane segment at 56–76 (IGLLWVMLFLWYATVFNSALY) threads the bilayer. The Extracellular segment spans residues 77–87 (GLEVRIVASNA). Residues 88 to 108 (WAVMNHFSIWLAASLSIFCLL) traverse the membrane as a helical segment. The Cytoplasmic segment spans residues 109-127 (KIANFSNLIFLHLKKRIKS). The helical transmembrane segment at 128–148 (VVLVILLGPLVFLICNLAVIT) threads the bilayer. Residues 149–181 (MDERVWTKEYEGNVTWKIKLRNAIQLSSLTVTT) are Extracellular-facing. An N-linked (GlcNAc...) asparagine glycan is attached at Asn161. Residues 182–202 (LANLIPFTLSLICFLLLICSL) traverse the membrane as a helical segment. At 203 to 226 (CKHLKKMRLHSKGSQDPSTKVHIK) the chain is on the cytoplasmic side. The chain crosses the membrane as a helical span at residues 227–247 (ALQTVTSFLMLFAIYFLCIIT). Topologically, residues 248–259 (STWNLRTQQSKL) are extracellular. A helical transmembrane segment spans residues 260-280 (VLLLCQTVAIMYPSFHSFILI). Residues 281–299 (MGSRKLKQTFLSVLWQMTR) are Cytoplasmic-facing.

The protein belongs to the G-protein coupled receptor T2R family.

The protein resides in the membrane. Its function is as follows. Receptor that may play a role in the perception of bitterness and is gustducin-linked. May play a role in sensing the chemical composition of the gastrointestinal content. The activity of this receptor may stimulate alpha gustducin, mediate PLC-beta-2 activation and lead to the gating of TRPM5. In Pan paniscus (Pygmy chimpanzee), this protein is Taste receptor type 2 member 19 (TAS2R19).